A 357-amino-acid chain; its full sequence is uncharacterized protein (357 aa).

This is an uncharacterized protein from Mycoplasma pneumoniae (strain ATCC 29342 / M129 / Subtype 1) (Mycoplasmoides pneumoniae).